A 348-amino-acid polypeptide reads, in one-letter code: Protein RecA (348 aa).

67–74 (GPESSGKT) contacts ATP.

The protein belongs to the RecA family.

It is found in the cytoplasm. Can catalyze the hydrolysis of ATP in the presence of single-stranded DNA, the ATP-dependent uptake of single-stranded DNA by duplex DNA, and the ATP-dependent hybridization of homologous single-stranded DNAs. It interacts with LexA causing its activation and leading to its autocatalytic cleavage. In Salinispora arenicola (strain CNS-205), this protein is Protein RecA.